The following is a 78-amino-acid chain: Defensin-like protein 141 (78 aa).

The N-terminal stretch at 1–24 (MTKSIISAFFIILILGMMVNEIEG) is a signal peptide. 4 cysteine pairs are disulfide-bonded: C31/C76, C40/C59, C45/C70, and C49/C72.

It belongs to the DEFL family.

The protein resides in the secreted. The protein is Defensin-like protein 141 (LCR3) of Arabidopsis thaliana (Mouse-ear cress).